An 878-amino-acid polypeptide reads, in one-letter code: MTGHEIRQRFLDFFAERGHRVVRSSSLVPANDPTLLFTNAGMNQFKDVFLGQEKRDYVRAASSQKCVRAGGKHNDLENVGYTRRHHTFFEMLGNFSFGDYFKADAIAYAWDLITKDYGLPKEKLYVTVFREDDEAEELWQKVTGIPKSRIFRLDEKDNFWQMGETGPCGPCSEIHYDLGIEAAEPGREHEQFPDDAGGRFVEIWNLVFMQYDRDQSGKLNPLPRPSIDTGMGLERIAAILQGKITNYDTDLIYPIIEHAAEIFGVTPGADTRTDTVLRIVADHARATEFLIHDGVVPSNEGRGYVLRKIMRRALRNVRMIGIEDPFLYKLTGFVGELMKGPYPELLESIQRVARVTKDEEHRYATTFLVAERVFNDAIKSIQGNTIPGALSFKLYDTYGLALDEQEDMAREHGLAIDRESFDTEMEQQRERARASWKGAEKAAVTPAYQKLVEQGRTKFLGYSELEAASRVVGLIVDKESVQQVPAGAKAELVLDQTPFYAESGGQVGDHGILYSAAGEKVADVETAFPGVPGLTVHRIAALAPIAVGDTLRAEVAVPLRDATRRNHTATHLLHASLRTVLGKHVKQAGSIVDPGRLRFDFTHYAGLDHAELEEVERLMNQEILRNTAVQTDILPLEQAIATGAMALFGEKYGDQVRVVSVPGFSRELCGGTHVQRTGDIGVAKIVYEGSISAGVRRIEAITGEAALRQYQETSGAVKRVADMVKVSEPALIEHIEKMIANERALEKQVEQLKNKLAQAAVGSLDAEARTIKGVKVVAAHLDGMDRAQMRALADSLRNKWKSAVVVLASVEDGNVAIISAVTKDLTAKVHAGKLASSLAQAVGGKGGGRPDMAEAGGKDPSCLDEALTAVYADVESKL.

Residues His567, His571, Cys669, and His673 each coordinate Zn(2+). Residues 841–860 (AVGGKGGGRPDMAEAGGKDP) are disordered.

Belongs to the class-II aminoacyl-tRNA synthetase family. Zn(2+) serves as cofactor.

It localises to the cytoplasm. The catalysed reaction is tRNA(Ala) + L-alanine + ATP = L-alanyl-tRNA(Ala) + AMP + diphosphate. Functionally, catalyzes the attachment of alanine to tRNA(Ala) in a two-step reaction: alanine is first activated by ATP to form Ala-AMP and then transferred to the acceptor end of tRNA(Ala). Also edits incorrectly charged Ser-tRNA(Ala) and Gly-tRNA(Ala) via its editing domain. This is Alanine--tRNA ligase from Solibacter usitatus (strain Ellin6076).